The primary structure comprises 502 residues: T-complex protein 11-like X-linked protein 2 (502 aa).

Residues 1–36 (MPKTEETVLQNDPSVAENGAPEPKTPGQSQKSKSFC) are disordered.

The protein belongs to the TCP11 family.

The chain is T-complex protein 11-like X-linked protein 2 from Homo sapiens (Human).